We begin with the raw amino-acid sequence, 340 residues long: Phenylalanine--tRNA ligase alpha subunit (340 aa).

Glu-255 contacts Mg(2+).

This sequence belongs to the class-II aminoacyl-tRNA synthetase family. Phe-tRNA synthetase alpha subunit type 1 subfamily. As to quaternary structure, tetramer of two alpha and two beta subunits. The cofactor is Mg(2+).

Its subcellular location is the cytoplasm. The catalysed reaction is tRNA(Phe) + L-phenylalanine + ATP = L-phenylalanyl-tRNA(Phe) + AMP + diphosphate + H(+). This is Phenylalanine--tRNA ligase alpha subunit from Exiguobacterium sp. (strain ATCC BAA-1283 / AT1b).